Consider the following 236-residue polypeptide: 2-C-methyl-D-erythritol 4-phosphate cytidylyltransferase (236 aa).

The protein belongs to the IspD/TarI cytidylyltransferase family. IspD subfamily.

It carries out the reaction 2-C-methyl-D-erythritol 4-phosphate + CTP + H(+) = 4-CDP-2-C-methyl-D-erythritol + diphosphate. It participates in isoprenoid biosynthesis; isopentenyl diphosphate biosynthesis via DXP pathway; isopentenyl diphosphate from 1-deoxy-D-xylulose 5-phosphate: step 2/6. Catalyzes the formation of 4-diphosphocytidyl-2-C-methyl-D-erythritol from CTP and 2-C-methyl-D-erythritol 4-phosphate (MEP). In Alkaliphilus oremlandii (strain OhILAs) (Clostridium oremlandii (strain OhILAs)), this protein is 2-C-methyl-D-erythritol 4-phosphate cytidylyltransferase.